The following is a 269-amino-acid chain: Formamidopyrimidine-DNA glycosylase (269 aa).

The active-site Schiff-base intermediate with DNA is P2. E3 serves as the catalytic Proton donor. K57 functions as the Proton donor; for beta-elimination activity in the catalytic mechanism. Residues H90, R109, and K150 each contribute to the DNA site. An FPG-type zinc finger spans residues 235 to 269 (QVYGREGEPCRVCGTPILAGKHAQRRTYWCRRCQK). R259 (proton donor; for delta-elimination activity) is an active-site residue.

Belongs to the FPG family. Monomer. Zn(2+) serves as cofactor.

The catalysed reaction is Hydrolysis of DNA containing ring-opened 7-methylguanine residues, releasing 2,6-diamino-4-hydroxy-5-(N-methyl)formamidopyrimidine.. The enzyme catalyses 2'-deoxyribonucleotide-(2'-deoxyribose 5'-phosphate)-2'-deoxyribonucleotide-DNA = a 3'-end 2'-deoxyribonucleotide-(2,3-dehydro-2,3-deoxyribose 5'-phosphate)-DNA + a 5'-end 5'-phospho-2'-deoxyribonucleoside-DNA + H(+). Its function is as follows. Involved in base excision repair of DNA damaged by oxidation or by mutagenic agents. Acts as a DNA glycosylase that recognizes and removes damaged bases. Has a preference for oxidized purines, such as 7,8-dihydro-8-oxoguanine (8-oxoG). Has AP (apurinic/apyrimidinic) lyase activity and introduces nicks in the DNA strand. Cleaves the DNA backbone by beta-delta elimination to generate a single-strand break at the site of the removed base with both 3'- and 5'-phosphates. This Cronobacter sakazakii (strain ATCC BAA-894) (Enterobacter sakazakii) protein is Formamidopyrimidine-DNA glycosylase.